The chain runs to 501 residues: Ribose import ATP-binding protein RbsA (501 aa).

ABC transporter domains follow at residues 5–241 and 249–495; these read LELK…VGRK and LNLP…VGKQ. 37-44 serves as a coordination point for ATP; the sequence is GENGAGKS.

Belongs to the ABC transporter superfamily. Ribose importer (TC 3.A.1.2.1) family. The complex is composed of an ATP-binding protein (RbsA), two transmembrane proteins (RbsC) and a solute-binding protein (RbsB).

The protein resides in the cell inner membrane. It catalyses the reaction D-ribose(out) + ATP + H2O = D-ribose(in) + ADP + phosphate + H(+). In terms of biological role, part of the ABC transporter complex RbsABC involved in ribose import. Responsible for energy coupling to the transport system. The chain is Ribose import ATP-binding protein RbsA from Photorhabdus laumondii subsp. laumondii (strain DSM 15139 / CIP 105565 / TT01) (Photorhabdus luminescens subsp. laumondii).